Consider the following 98-residue polypeptide: MEVTDVRLRRVNTDGRMRAIASITLDHEFVVHDIRVIDGNNGLFVAMPSKRTPDGEFRDIAHPINSSTRGKIQDAVLNEYHRLGEEEETIEYEEAGAS.

This sequence belongs to the SpoVG family.

In terms of biological role, essential for sporulation. Interferes with or is a negative regulator of the pathway leading to asymmetric septation. This Bacillus pumilus (strain SAFR-032) protein is Putative septation protein SpoVG.